A 196-amino-acid polypeptide reads, in one-letter code: V-type proton ATPase subunit E (196 aa).

Belongs to the V-ATPase E subunit family.

In terms of biological role, produces ATP from ADP in the presence of a proton gradient across the membrane. This Clostridium botulinum (strain Alaska E43 / Type E3) protein is V-type proton ATPase subunit E.